A 419-amino-acid polypeptide reads, in one-letter code: MAATKREPLRPISSNAGTVERRARGGAAAAAAAKEKEKENEVPTEIGRGKDGGEKKPPVVVAVVVPPAPPLKPSSLQVRMKAEEEKEREEEEEGSSPAVALVAGLQVRMGPRGRELLLPPPPPPPPLPLPTSSSYEAWDLSDNEAAPASSWATLPNRALLCRPLPLDVGRCTCIIAKETLAAAAAGARGVALYSLYTNEGQGRQDRKLAVARHRRRRGRSEFVVAQNLDGIFCTSDKNFLGTLSSNLVGSRYRIWGQGNRVDEIKSQSKRLLGVVAFAPTVTTLTGSFRSMRAWIPKNQSIHLKNSNSAQIQHISGLPKDWQEKKIKADQLCSRSPFYNNMTKRYELDFRERAGRMGYKVQPSVKNFQMTLEEKGRQTILQLGRIGKSKYIMDFRYPLTGYQALCICLASIDSKLCCTL.

Residues 1–96 form a disordered region; sequence MAATKREPLR…EREEEEEGSS (96 aa). Basic and acidic residues predominate over residues 33-57; sequence AKEKEKENEVPTEIGRGKDGGEKKP.

This sequence belongs to the TUB family.

This chain is Tubby-like protein 4 (TULP4), found in Oryza sativa subsp. japonica (Rice).